A 285-amino-acid polypeptide reads, in one-letter code: MEVVIVTGMSGAGKSASSHILEDLGYYTLDNMPPSLLLSFIDLTTKSKKKINKIACVVDIRGGEFFADLMKSITLLKNQSIDVKILYLDASDEILIRRYKEHRRPHPLAINGNISQGISNERELLSEVRNSADSIINTSNLTLGELRRKILYVFSLKDVDTKLAISVVSFGFKHGILLDADLVFDVRFLPNPYYIEELKKSSGLNTDIKDYVFGFDEANEFLDKLVDMVEFLIPKYSKEGKTNLVIGIGCTGGKHRSVAIAQALTARLEGNGEKVYVSHRDQKFW.

Position 8 to 15 (8 to 15 (GMSGAGKS)) interacts with ATP. GTP is bound at residue 59–62 (DIRG).

Belongs to the RapZ-like family.

Its function is as follows. Displays ATPase and GTPase activities. The polypeptide is Nucleotide-binding protein FMG_1084 (Finegoldia magna (strain ATCC 29328 / DSM 20472 / WAL 2508) (Peptostreptococcus magnus)).